A 140-amino-acid polypeptide reads, in one-letter code: Nucleoside diphosphate kinase (140 aa).

ATP-binding residues include Lys9, Phe57, Arg85, Thr91, Arg102, and Asn112. Residue His115 is the Pros-phosphohistidine intermediate of the active site.

The protein belongs to the NDK family. In terms of assembly, homotetramer. The cofactor is Mg(2+).

Its subcellular location is the cytoplasm. It catalyses the reaction a 2'-deoxyribonucleoside 5'-diphosphate + ATP = a 2'-deoxyribonucleoside 5'-triphosphate + ADP. It carries out the reaction a ribonucleoside 5'-diphosphate + ATP = a ribonucleoside 5'-triphosphate + ADP. Functionally, major role in the synthesis of nucleoside triphosphates other than ATP. The ATP gamma phosphate is transferred to the NDP beta phosphate via a ping-pong mechanism, using a phosphorylated active-site intermediate. In Chlorobaculum parvum (strain DSM 263 / NCIMB 8327) (Chlorobium vibrioforme subsp. thiosulfatophilum), this protein is Nucleoside diphosphate kinase.